Consider the following 374-residue polypeptide: MAIRKKSSKNPPVLSHEFVLQNHADIVSCVAMVFLLGLMFEITAKVSIIFVTLQYNVTLPATEEQATESAFLYYYGIKDLATVFFYMLVAIIIHAIIQEYVLDKINRRMHFSKTKHSKFNESGQLSAFYLFSCIWGTFILISENYISDPTILWRAYPHNLMTFQMKFFYISQLAYWFHAFPELYFQKTKKEDIPRQLVYIGLYLFHIAGAYLLNLNHLGLVLLVLHYFVEFLFHISRLFYFSDEKYQKGFSLWAVLFVLGRLLTLILSVLTVGFGLARAENQKLDFSTGNFNVLAVRIAVLASICITQAFMMWKFINFQLRRWREHSAFQAPAVKKKPPVTKGRSSRKGTENGVNGTVTSNGADSPRNRKEKSS.

Over 1–29 the chain is Cytoplasmic; the sequence is MAIRKKSSKNPPVLSHEFVLQNHADIVSC. A helical membrane pass occupies residues 30–50; that stretch reads VAMVFLLGLMFEITAKVSIIF. At 51–81 the chain is on the lumenal side; sequence VTLQYNVTLPATEEQATESAFLYYYGIKDLA. An N-linked (GlcNAc...) asparagine glycan is attached at asparagine 56. Residues 82 to 102 traverse the membrane as a helical segment; it reads TVFFYMLVAIIIHAIIQEYVL. The Cytoplasmic segment spans residues 103–121; sequence DKINRRMHFSKTKHSKFNE. The region spanning 117–326 is the TLC domain; the sequence is SKFNESGQLS…NFQLRRWREH (210 aa). Residues 122-142 traverse the membrane as a helical segment; the sequence is SGQLSAFYLFSCIWGTFILIS. The Lumenal portion of the chain corresponds to 143 to 159; that stretch reads ENYISDPTILWRAYPHN. A helical membrane pass occupies residues 160 to 180; the sequence is LMTFQMKFFYISQLAYWFHAF. Over 181–192 the chain is Cytoplasmic; it reads PELYFQKTKKED. The helical transmembrane segment at 193 to 213 threads the bilayer; sequence IPRQLVYIGLYLFHIAGAYLL. Asparagine 214 is a topological domain (lumenal). A helical transmembrane segment spans residues 215-235; it reads LNHLGLVLLVLHYFVEFLFHI. The Cytoplasmic segment spans residues 236 to 251; sequence SRLFYFSDEKYQKGFS. The chain crosses the membrane as a helical span at residues 252 to 272; that stretch reads LWAVLFVLGRLLTLILSVLTV. Residues 273–297 lie on the Lumenal side of the membrane; sequence GFGLARAENQKLDFSTGNFNVLAVR. The helical transmembrane segment at 298 to 318 threads the bilayer; that stretch reads IAVLASICITQAFMMWKFINF. Residues 319–374 lie on the Cytoplasmic side of the membrane; sequence QLRRWREHSAFQAPAVKKKPPVTKGRSSRKGTENGVNGTVTSNGADSPRNRKEKSS. A disordered region spans residues 331–374; sequence APAVKKKPPVTKGRSSRKGTENGVNGTVTSNGADSPRNRKEKSS. Residues 334 to 347 are compositionally biased toward basic residues; the sequence is VKKKPPVTKGRSSR. Positions 352–363 are enriched in polar residues; sequence NGVNGTVTSNGA. The residue at position 365 (serine 365) is a Phosphoserine.

This sequence belongs to the TRAM family. As to quaternary structure, interacts with SEC61B. May interact with Derlin-1/DERL1. In terms of processing, N-glycosylated.

The protein localises to the endoplasmic reticulum membrane. In terms of biological role, involved in the translocation of nascent protein chains into or through the endoplasmic reticulum (ER) membrane by facilitating the proper chain positioning at the SEC61 channel. Regulates the exposure of nascent secretory protein chain to the cytosol during translocation into the ER. May affect the phospholipid bilayer in the vicinity of the lateral gate of the SEC61 channel, thereby facilitating ER protein transport. Intimately associates with transmembrane (TM) domain of nascent membrane proteins during the entire integration process into the ER membrane. Associates with the second TM domain of G-protein-coupled receptor opsin/OPSD nascent chain in the ER membrane, which may facilitate its integration into the membrane. Under conditions of ER stress, participates in the disposal of misfolded ER membrane proteins during the unfolded protein response (UPR), an integrated stress response (ISR) pathway, by selectively retrotranslocating misfolded ER-membrane proteins from the ER into the cytosol where they are ubiquitinated and degraded by the proteasome. In Bos taurus (Bovine), this protein is Translocating chain-associated membrane protein 1 (TRAM1).